The primary structure comprises 276 residues: Aliphatic sulfonates import ATP-binding protein SsuB 1 (276 aa).

Residues 1-21 (MSTGNVTTLRRPEAPPSLPAG) form a disordered region. One can recognise an ABC transporter domain in the interval 39–259 (FSFRNVTKSF…RHGTPEFARL (221 aa)). Residue 71–78 (GKSGCGKS) coordinates ATP.

Belongs to the ABC transporter superfamily. Aliphatic sulfonates importer (TC 3.A.1.17.2) family. The complex is composed of two ATP-binding proteins (SsuB), two transmembrane proteins (SsuC) and a solute-binding protein (SsuA).

The protein localises to the cell inner membrane. It carries out the reaction ATP + H2O + aliphatic sulfonate-[sulfonate-binding protein]Side 1 = ADP + phosphate + aliphatic sulfonateSide 2 + [sulfonate-binding protein]Side 1.. Functionally, part of the ABC transporter complex SsuABC involved in aliphatic sulfonates import. Responsible for energy coupling to the transport system. This Agrobacterium fabrum (strain C58 / ATCC 33970) (Agrobacterium tumefaciens (strain C58)) protein is Aliphatic sulfonates import ATP-binding protein SsuB 1.